Consider the following 515-residue polypeptide: Maturase K (515 aa).

The protein belongs to the intron maturase 2 family. MatK subfamily.

It localises to the plastid. The protein localises to the chloroplast. Functionally, usually encoded in the trnK tRNA gene intron. Probably assists in splicing its own and other chloroplast group II introns. In Zingiber mioga (Myoga ginger), this protein is Maturase K.